A 309-amino-acid chain; its full sequence is Malate dehydrogenase (309 aa).

Residues 9–14 and D33 each bind NAD(+); that span reads GAGFVG. Substrate-binding residues include R82 and R88. Residues N95 and 118–120 each bind NAD(+); that span reads VNN. The substrate site is built by N120 and R151. Catalysis depends on H175, which acts as the Proton acceptor.

This sequence belongs to the LDH/MDH superfamily. MDH type 3 family.

The enzyme catalyses (S)-malate + NAD(+) = oxaloacetate + NADH + H(+). In terms of biological role, catalyzes the reversible oxidation of malate to oxaloacetate. This chain is Malate dehydrogenase, found in Chloroflexus aggregans (strain MD-66 / DSM 9485).